A 269-amino-acid chain; its full sequence is Tryptophan synthase alpha chain (269 aa).

Catalysis depends on proton acceptor residues Glu49 and Asp60.

It belongs to the TrpA family. Tetramer of two alpha and two beta chains.

It catalyses the reaction (1S,2R)-1-C-(indol-3-yl)glycerol 3-phosphate + L-serine = D-glyceraldehyde 3-phosphate + L-tryptophan + H2O. The protein operates within amino-acid biosynthesis; L-tryptophan biosynthesis; L-tryptophan from chorismate: step 5/5. The alpha subunit is responsible for the aldol cleavage of indoleglycerol phosphate to indole and glyceraldehyde 3-phosphate. The sequence is that of Tryptophan synthase alpha chain from Acidovorax sp. (strain JS42).